Reading from the N-terminus, the 117-residue chain is MKKVLNFHFSYIYTYFITITTNYKYGDTEKIFRKFRSYIYNHDKNSHVFSIKETTKNSNGLHYHILVFTNKKLDYSRVHKHMPSHSDIRIELVPKSISDIKNVYKYMLKTKKDIKMS.

A helical transmembrane segment spans residues 4–26 (VLNFHFSYIYTYFITITTNYKYG).

The protein localises to the host membrane. This is an uncharacterized protein from Sulfolobus islandicus rod-shaped virus 1 (SIRV-1).